A 579-amino-acid polypeptide reads, in one-letter code: Carboxysome shell carbonic anhydrase (579 aa).

Residues 72–95 (GGGRVRSARDQRQPGWVRRDKGAT) are disordered. Residues 78-93 (SARDQRQPGWVRRDKG) are compositionally biased toward basic and acidic residues. Cysteine 240 is a Zn(2+) binding site. The active-site Proton acceptor is the aspartate 242. Positions 308 and 319 each coordinate Zn(2+).

Belongs to the beta-class carbonic anhydrase family. CsoSCA subfamily. In terms of assembly, homodimer. The cofactor is Zn(2+).

Its subcellular location is the carboxysome. The catalysed reaction is hydrogencarbonate + H(+) = CO2 + H2O. Inhibited by dithiothreitol, partially inhibited by acetatzolamide and cyanide. Reversible hydration of carbon dioxide. Essential for photosynthetic carbon dioxide fixation, supplies CO(2) to RuBisCO (ribulose bisphosphate carboxylase, cbbL-cbbS) in the carboxysome. The polypeptide is Carboxysome shell carbonic anhydrase (Parasynechococcus marenigrum (strain WH8102)).